Consider the following 449-residue polypeptide: NADH-quinone oxidoreductase subunit D (449 aa).

This sequence belongs to the complex I 49 kDa subunit family. In terms of assembly, NDH-1 is composed of 14 different subunits. Subunits NuoB, C, D, E, F, and G constitute the peripheral sector of the complex.

The protein resides in the cell membrane. It carries out the reaction a quinone + NADH + 5 H(+)(in) = a quinol + NAD(+) + 4 H(+)(out). Its function is as follows. NDH-1 shuttles electrons from NADH, via FMN and iron-sulfur (Fe-S) centers, to quinones in the respiratory chain. The immediate electron acceptor for the enzyme in this species is believed to be a menaquinone. Couples the redox reaction to proton translocation (for every two electrons transferred, four hydrogen ions are translocated across the cytoplasmic membrane), and thus conserves the redox energy in a proton gradient. This chain is NADH-quinone oxidoreductase subunit D, found in Saccharopolyspora erythraea (strain ATCC 11635 / DSM 40517 / JCM 4748 / NBRC 13426 / NCIMB 8594 / NRRL 2338).